The primary structure comprises 286 residues: Release factor glutamine methyltransferase (286 aa).

S-adenosyl-L-methionine is bound by residues 121-125, Asp144, Trp172, and Asn188; that span reads GTGTG. Position 188-191 (188-191) interacts with substrate; the sequence is NPPY.

The protein belongs to the protein N5-glutamine methyltransferase family. PrmC subfamily.

It catalyses the reaction L-glutaminyl-[peptide chain release factor] + S-adenosyl-L-methionine = N(5)-methyl-L-glutaminyl-[peptide chain release factor] + S-adenosyl-L-homocysteine + H(+). In terms of biological role, methylates the class 1 translation termination release factors RF1/PrfA and RF2/PrfB on the glutamine residue of the universally conserved GGQ motif. This is Release factor glutamine methyltransferase from Vibrio cholerae serotype O1 (strain ATCC 39315 / El Tor Inaba N16961).